The sequence spans 301 residues: Homoserine kinase (301 aa).

Residue 89–99 coordinates ATP; that stretch reads KPGSGLGSSSA.

The protein belongs to the GHMP kinase family. Homoserine kinase subfamily.

It localises to the cytoplasm. It carries out the reaction L-homoserine + ATP = O-phospho-L-homoserine + ADP + H(+). Its pathway is amino-acid biosynthesis; L-threonine biosynthesis; L-threonine from L-aspartate: step 4/5. In terms of biological role, catalyzes the ATP-dependent phosphorylation of L-homoserine to L-homoserine phosphate. This Methanococcus maripaludis (strain DSM 14266 / JCM 13030 / NBRC 101832 / S2 / LL) protein is Homoserine kinase.